Here is a 397-residue protein sequence, read N- to C-terminus: ORC1-type DNA replication protein 8 (397 aa).

Residues 61–65, Tyr-211, and Arg-223 contribute to the ATP site; that span reads VGKTA.

This sequence belongs to the CDC6/cdc18 family.

Involved in regulation of DNA replication. The protein is ORC1-type DNA replication protein 8 (orc8) of Halobacterium salinarum (strain ATCC 700922 / JCM 11081 / NRC-1) (Halobacterium halobium).